Consider the following 315-residue polypeptide: Small ribosomal subunit biogenesis GTPase RsgA (315 aa).

One can recognise a CP-type G domain in the interval 82–246; sequence DQFKSKVLAA…LIDSPGFQEF (165 aa). Residues 130–133 and 184–192 contribute to the GTP site; these read NKID and GQSGMGKSS. Residues Cys270, Cys275, His277, and Cys283 each coordinate Zn(2+).

Belongs to the TRAFAC class YlqF/YawG GTPase family. RsgA subfamily. Monomer. Associates with 30S ribosomal subunit, binds 16S rRNA. Requires Zn(2+) as cofactor.

Its subcellular location is the cytoplasm. One of several proteins that assist in the late maturation steps of the functional core of the 30S ribosomal subunit. Helps release RbfA from mature subunits. May play a role in the assembly of ribosomal proteins into the subunit. Circularly permuted GTPase that catalyzes slow GTP hydrolysis, GTPase activity is stimulated by the 30S ribosomal subunit. The protein is Small ribosomal subunit biogenesis GTPase RsgA of Ralstonia pickettii (strain 12J).